The chain runs to 48 residues: Delta-stichotoxin-Hcr1b (48 aa).

3 disulfide bridges follow: C3–C43, C5–C33, and C26–C44.

Belongs to the sea anemone sodium channel inhibitory toxin family. Type II subfamily.

It localises to the secreted. It is found in the nematocyst. Binds to site 3 of voltage-gated sodium channels and inhibits the inactivation process. The polypeptide is Delta-stichotoxin-Hcr1b (Radianthus crispa (Leathery sea anemone)).